The sequence spans 360 residues: Uptake hydrogenase small subunit (360 aa).

A signal peptide (tat-type signal) is located at residues 1-46; it reads MATAETFYDVIRRQGITRRSFTKFCSLTAASLGFGPGAATAMAEAL. Residues C62, C65, C160, C194, H232, C235, C260, and C266 each coordinate [4Fe-4S] cluster. [3Fe-4S] cluster contacts are provided by C275, C294, and C297.

It belongs to the [NiFe]/[NiFeSe] hydrogenase small subunit family. In terms of assembly, heterodimer of a large and a small subunit. [4Fe-4S] cluster is required as a cofactor. It depends on [3Fe-4S] cluster as a cofactor. Post-translationally, predicted to be exported by the Tat system. The position of the signal peptide cleavage has not been experimentally proven.

The protein localises to the cell membrane. The enzyme catalyses H2 + A = AH2. This enzyme recycles the H(2) produced by nitrogenase to increase the production of ATP and to protect nitrogenase against inhibition or damage by O(2) under carbon- or phosphate-limited conditions. In Rhizobium leguminosarum bv. viciae, this protein is Uptake hydrogenase small subunit (hupA).